A 476-amino-acid polypeptide reads, in one-letter code: MKDTFVEKVDDFVKQHDVLKERSTIVVGVSGGPDSVALLYYLLEKRAAKQFEIVVAHVDHMFRGDESHEDLQFVQDLCKELGVICETIRINVSQYQQQYGMNAQVAARECRYAFLERIMKKYDARYVALGHHGDDQVETILMRLVRGSTPKGYAGIAVKRPFHNGYLIRPLLGVTKEEIVDYCHKLKIIPRIDPSNKKEVYTRNRLRKYVLPHLKEENPQVHEKFQKFSMQMQEDEAYLQELAFEKMNKVITKKSDKQISLSIPAFESMSMPLQRRGIQLILNYLYEYKIPSSLSSIHIDKVIEFFKRTQPSGSLDFPGDLKIVRAYEECSFGFKQEIVSPFLQDLSVPGTITLSNGDKLVTEVSEDIPSNMNETVFVAKYNDISYPLRIRSRENGDRMSIQGMNGTKKIKAIFIEAKVPREKREEWPVVCDARGNVIWLPLLKRSAFAISKETAKKDKYMIIHYKSKESSGRIMK.

Residue 30-35 (SGGPDS) participates in ATP binding.

The protein belongs to the tRNA(Ile)-lysidine synthase family.

The protein resides in the cytoplasm. The catalysed reaction is cytidine(34) in tRNA(Ile2) + L-lysine + ATP = lysidine(34) in tRNA(Ile2) + AMP + diphosphate + H(+). Ligates lysine onto the cytidine present at position 34 of the AUA codon-specific tRNA(Ile) that contains the anticodon CAU, in an ATP-dependent manner. Cytidine is converted to lysidine, thus changing the amino acid specificity of the tRNA from methionine to isoleucine. This is tRNA(Ile)-lysidine synthase from Bacillus cereus (strain ATCC 10987 / NRS 248).